A 323-amino-acid polypeptide reads, in one-letter code: Sphingolipid delta(4)-desaturase DES1 (323 aa).

The next 2 membrane-spanning stretches (helical) occupy residues 41–61 and 68–88; these read HNLIWIVSLMVLTQLVAFYLV and WLLFWTYVVGSCISHSMTLAI. The Histidine box-1 motif lies at 89-93; it reads HEISH. Residues 104–124 traverse the membrane as a helical segment; sequence WNRCFGMFANLPLGLPYSVSF. Positions 128 to 132 match the Histidine box-2 motif; sequence HMDHH. 3 helical membrane passes run 152-172, 185-205, and 210-230; these read FFCTPLRKLVWIILQPLFYTI, LEIINLVVQFSFDALIYYTLG, and FYMLVGSILGLGLHPISGHFI. The Histidine box-3 motif lies at 259–263; that stretch reads HNEHH.

It belongs to the fatty acid desaturase type 1 family. DEGS subfamily. As to quaternary structure, interacts with RLBP1; the interaction increases synthesis of chromophore-precursors by DEGS1.

The protein resides in the endoplasmic reticulum membrane. It carries out the reaction an N-acylsphinganine + 2 Fe(II)-[cytochrome b5] + O2 + 2 H(+) = an N-acylsphing-4-enine + 2 Fe(III)-[cytochrome b5] + 2 H2O. The enzyme catalyses all-trans-retinol = 11-cis-retinol. It catalyses the reaction all-trans-retinol = 9-cis-retinol. The catalysed reaction is all-trans-retinol = 13-cis-retinol. It carries out the reaction 11-cis-retinol = 13-cis-retinol. The enzyme catalyses 11-cis-retinol = 9-cis-retinol. Has sphingolipid-delta-4-desaturase activity. Converts D-erythro-sphinganine to D-erythro-sphingosine (E-sphing-4-enine). Catalyzes the equilibrium isomerization of retinols. The protein is Sphingolipid delta(4)-desaturase DES1 (degs1) of Xenopus tropicalis (Western clawed frog).